The following is a 163-amino-acid chain: Acetolactate synthase small subunit (163 aa).

The 76-residue stretch at 4-79 folds into the ACT domain; it reads ILSVLLENES…VFKVVNLSEQ (76 aa).

It belongs to the acetolactate synthase small subunit family. In terms of assembly, dimer of large and small chains.

It carries out the reaction 2 pyruvate + H(+) = (2S)-2-acetolactate + CO2. It functions in the pathway amino-acid biosynthesis; L-isoleucine biosynthesis; L-isoleucine from 2-oxobutanoate: step 1/4. It participates in amino-acid biosynthesis; L-valine biosynthesis; L-valine from pyruvate: step 1/4. This is Acetolactate synthase small subunit (ilvH) from Haemophilus influenzae (strain ATCC 51907 / DSM 11121 / KW20 / Rd).